Here is a 318-residue protein sequence, read N- to C-terminus: 2-keto-3-deoxygluconate permease (318 aa).

The next 10 membrane-spanning stretches (helical) occupy residues 10 to 30, 42 to 62, 76 to 96, 105 to 125, 139 to 159, 162 to 182, 199 to 219, 224 to 244, 254 to 274, and 289 to 309; these read IPGG…TFTP, GLIT…GASI, VLVV…GAFL, LLAG…NGGL, AGAF…VILG, GIAT…LIGF, VQTL…LSVI, FAGI…LILA, TAGI…LLIA, and ALVA…TALW.

This sequence belongs to the KdgT transporter family.

Its subcellular location is the cell inner membrane. The catalysed reaction is 2-dehydro-3-deoxy-D-gluconate(in) + H(+)(in) = 2-dehydro-3-deoxy-D-gluconate(out) + H(+)(out). Catalyzes the proton-dependent uptake of 2-keto-3-deoxygluconate (KDG) into the cell. The chain is 2-keto-3-deoxygluconate permease from Pectobacterium atrosepticum (strain SCRI 1043 / ATCC BAA-672) (Erwinia carotovora subsp. atroseptica).